A 277-amino-acid chain; its full sequence is Large ribosomal subunit protein uL2c (277 aa).

A disordered region spans residues 223-277; the sequence is VVMNPIDHPHGGGEGRAPIGRKKPLTPWGHPALGKRSRKNNKYSDTLILRRRKNS.

This sequence belongs to the universal ribosomal protein uL2 family. As to quaternary structure, part of the 50S ribosomal subunit.

It localises to the plastid. The protein localises to the chloroplast. The protein is Large ribosomal subunit protein uL2c (rpl2) of Marchantia polymorpha (Common liverwort).